Here is a 373-residue protein sequence, read N- to C-terminus: Queuine tRNA-ribosyltransferase (373 aa).

The active-site Proton acceptor is Asp-89. Substrate contacts are provided by residues 89-93 (DSGGF), Asp-143, Gln-192, and Gly-220. The RNA binding stretch occupies residues 251–257 (GVGTPED). Residue Asp-270 is the Nucleophile of the active site. Residues 275 to 279 (TRNAR) form an RNA binding; important for wobble base 34 recognition region. 4 residues coordinate Zn(2+): Cys-308, Cys-310, Cys-313, and His-339.

The protein belongs to the queuine tRNA-ribosyltransferase family. In terms of assembly, homodimer. Within each dimer, one monomer is responsible for RNA recognition and catalysis, while the other monomer binds to the replacement base PreQ1. Zn(2+) is required as a cofactor.

It catalyses the reaction 7-aminomethyl-7-carbaguanine + guanosine(34) in tRNA = 7-aminomethyl-7-carbaguanosine(34) in tRNA + guanine. Its pathway is tRNA modification; tRNA-queuosine biosynthesis. Catalyzes the base-exchange of a guanine (G) residue with the queuine precursor 7-aminomethyl-7-deazaguanine (PreQ1) at position 34 (anticodon wobble position) in tRNAs with GU(N) anticodons (tRNA-Asp, -Asn, -His and -Tyr). Catalysis occurs through a double-displacement mechanism. The nucleophile active site attacks the C1' of nucleotide 34 to detach the guanine base from the RNA, forming a covalent enzyme-RNA intermediate. The proton acceptor active site deprotonates the incoming PreQ1, allowing a nucleophilic attack on the C1' of the ribose to form the product. After dissociation, two additional enzymatic reactions on the tRNA convert PreQ1 to queuine (Q), resulting in the hypermodified nucleoside queuosine (7-(((4,5-cis-dihydroxy-2-cyclopenten-1-yl)amino)methyl)-7-deazaguanosine). In Aliarcobacter butzleri (strain RM4018) (Arcobacter butzleri), this protein is Queuine tRNA-ribosyltransferase.